The primary structure comprises 128 residues: Nucleoside diphosphate kinase B (128 aa).

M1 carries the post-translational modification N-acetylmethionine. Positions 9, 39, 70, 81, and 91 each coordinate ATP. The Pros-phosphohistidine intermediate role is filled by H94.

This sequence belongs to the NDK family. Mg(2+) is required as a cofactor.

It is found in the cytoplasm. Its subcellular location is the nucleus. It localises to the cell projection. The protein localises to the lamellipodium. The protein resides in the ruffle. It carries out the reaction a 2'-deoxyribonucleoside 5'-diphosphate + ATP = a 2'-deoxyribonucleoside 5'-triphosphate + ADP. The catalysed reaction is a ribonucleoside 5'-diphosphate + ATP = a ribonucleoside 5'-triphosphate + ADP. Its function is as follows. Major role in the synthesis of nucleoside triphosphates other than ATP. The polypeptide is Nucleoside diphosphate kinase B (nme2) (Merluccius australis australis (Austral hake)).